The primary structure comprises 443 residues: Multidrug resistance protein MdtA (443 aa).

Positions 1-24 are cleaved as a signal peptide; sequence MKAQSKRTSRLLILLGIAVAIIVA. Over residues 36-46 the composition is skewed to polar residues; it reads DGSTGAQQHAV. Disordered stretches follow at residues 36–57 and 398–443; these read DGST…GGRR and TPRS…AEKS. Residues 409 to 419 show a composition bias toward basic and acidic residues; that stretch reads AAEKPATAEKA. The segment covering 427–443 has biased composition (low complexity); it reads SATGASAGSTTTAAEKS.

It belongs to the membrane fusion protein (MFP) (TC 8.A.1) family. In terms of assembly, part of a tripartite efflux system composed of MdtA, MdtB and MdtC.

The protein resides in the cell inner membrane. This is Multidrug resistance protein MdtA from Yersinia enterocolitica serotype O:8 / biotype 1B (strain NCTC 13174 / 8081).